Here is a 134-residue protein sequence, read N- to C-terminus: Large ribosomal subunit protein uL14 (134 aa).

Belongs to the universal ribosomal protein uL14 family. As to quaternary structure, in the 70S ribosome, L14 and L19 interact and together make contacts with the 16S rRNA in bridges B5 and B8. Part of the 50S ribosomal subunit. Forms a cluster with proteins L3 and L19.

Functionally, forms part of two intersubunit bridges in the 70S ribosome. Binds to 23S rRNA. This is Large ribosomal subunit protein uL14 from Deinococcus radiodurans (strain ATCC 13939 / DSM 20539 / JCM 16871 / CCUG 27074 / LMG 4051 / NBRC 15346 / NCIMB 9279 / VKM B-1422 / R1).